The sequence spans 714 residues: RB-associated KRAB zinc finger protein (714 aa).

One can recognise a KRAB domain in the interval 8–79 (VSFKDVAVDF…GGEFPCQHSP (72 aa)). Glycyl lysine isopeptide (Lys-Gly) (interchain with G-Cter in SUMO2) cross-links involve residues Lys97 and Lys259. Residues 171-260 (TYHGEKMCEF…YQRSQMEMKP (90 aa)) form a required for interaction with RB1 region. 2 C2H2-type zinc fingers span residues 261 to 283 (FECS…QRAH) and 289 to 311 (YECN…RRSH). Residue Lys315 forms a Glycyl lysine isopeptide (Lys-Gly) (interchain with G-Cter in SUMO2) linkage. C2H2-type zinc fingers lie at residues 317–339 (YKCN…LRTH), 345–367 (YECS…QRNH), 373–395 (YPCN…QRTH), 401–423 (YKCN…QRTH), 429–451 (YQCS…YRSH), 457–479 (YECN…RKVH), and 485–505 (HECS…HTAH). A Glycyl lysine isopeptide (Lys-Gly) (interchain with G-Cter in SUMO2) cross-link involves residue Lys357. Residues 417–714 (ITHQRTHTGE…NMNVLDVENL (298 aa)) are interaction with AR. The segment at 511–533 (YECNECGKTFLVNSAFDGHQPLP) adopts a C2H2-type 10; degenerate zinc-finger fold. Residues Lys534 and Lys537 each participate in a glycyl lysine isopeptide (Lys-Gly) (interchain with G-Cter in SUMO2) cross-link. C2H2-type zinc fingers lie at residues 539-561 (YECN…YRSH), 567-589 (YGCS…QRVH), 595-617 (YECY…HRIH), 623-645 (YECS…YRSH), 651-673 (YECN…YRTH), and 679-701 (YECN…QRIH).

Belongs to the krueppel C2H2-type zinc-finger protein family. As to quaternary structure, interacts with AR and RB1. May also interact with other nuclear hormone receptors such as NR3C1/GR. As to expression, expressed in bone, brain, heart, kidney, liver, lung, pancreas and placenta.

It localises to the nucleus. May repress E2F-dependent transcription. May promote AR-dependent transcription. This Homo sapiens (Human) protein is RB-associated KRAB zinc finger protein (RBAK).